An 837-amino-acid chain; its full sequence is Neural cell adhesion molecule 2 (837 aa).

The signal sequence occupies residues 1-19 (MSLLLSFYLLGLLVSSGQA). The Extracellular segment spans residues 20–697 (LLQVTISLSK…PNIIKDTLFN (678 aa)). Ig-like C2-type domains follow at residues 21 to 108 (LQVT…ATVV), 113 to 202 (QKLT…RDII), 208 to 297 (PPAI…AFLQ), 302 to 396 (PHII…MYLD), and 401 to 491 (PKFI…YILA). Intrachain disulfides connect C42/C93 and C136/C186. N177 and N219 each carry an N-linked (GlcNAc...) asparagine glycan. C232 and C281 form a disulfide bridge. N309 carries an N-linked (GlcNAc...) asparagine glycan. C322 and C380 are disulfide-bonded. N-linked (GlcNAc...) asparagine glycans are attached at residues N406, N419, N445, N474, and N562. C422 and C475 are oxidised to a cystine. Fibronectin type-III domains follow at residues 498–591 (SPYG…TLPV) and 593–688 (EPSP…PPKP). The chain crosses the membrane as a helical span at residues 698 to 718 (GLGLGAVIGLGVAALLLILVV). The Cytoplasmic segment spans residues 719–837 (TDVSCFFIRQ…IQSKEDDSKA (119 aa)). The span at 764–785 (GSKEPIVEMRTEDERVTNHEDG) shows a compositional bias: basic and acidic residues. Positions 764–818 (GSKEPIVEMRTEDERVTNHEDGSPVNEPNETTPLTEPEKLPLKEEDGKEALNPET) are disordered. S765 is subject to Phosphoserine. At T780 the chain carries Phosphothreonine. S786 bears the Phosphoserine mark. A compositionally biased stretch (low complexity) spans 789–798 (NEPNETTPLT). The segment covering 799–814 (EPEKLPLKEEDGKEAL) has biased composition (basic and acidic residues).

As to expression, expressed most strongly in adult and fetal brain.

It localises to the cell membrane. May play important roles in selective fasciculation and zone-to-zone projection of the primary olfactory axons. The sequence is that of Neural cell adhesion molecule 2 (NCAM2) from Homo sapiens (Human).